We begin with the raw amino-acid sequence, 422 residues long: Keratin, type I cytoskeletal 23 (422 aa).

A compositionally biased stretch (polar residues) spans 1 to 13 (MNSGHSFSQTPSA). The interval 1–71 (MNSGHSFSQT…GRSSPLLGGN (71 aa)) is head. Positions 1-73 (MNSGHSFSQT…SSPLLGGNGK (73 aa)) are disordered. The tract at residues 72-107 (GKATMQNLNDRLASYLEKVRALEEANMKLESRILKW) is coil 1A. An IF rod domain is found at 72 to 382 (GKATMQNLND…RLLEGESEGT (311 aa)). Positions 108–125 (HQQRDPGSKKDYSQYEEN) are linker 1. The tract at residues 126-217 (ITHLQEQIVD…KHHEQEMEKH (92 aa)) is coil 1B. Residues 218 to 240 (HVPSDFNVNVKVDTGPREDLIKV) form a linker 12 region. The interval 241-378 (LEDMRQEYEL…TTYRRLLEGE (138 aa)) is coil 2. The segment at 379–422 (SEGTREESKSSMKVSATPKIKAITQETINGRLVLCQVNEIQKHA) is rod-like helical tail.

Belongs to the intermediate filament family. Heterotetramer of two type I and two type II keratins.

The chain is Keratin, type I cytoskeletal 23 (KRT23) from Homo sapiens (Human).